The primary structure comprises 384 residues: 23S rRNA (uracil(747)-C(5))-methyltransferase RlmC (384 aa).

[4Fe-4S] cluster-binding residues include Cys-7, Cys-15, Cys-18, and Cys-94. S-adenosyl-L-methionine is bound by residues Gln-219, Phe-248, Glu-269, and Asn-316. The Nucleophile role is filled by Cys-343.

It belongs to the class I-like SAM-binding methyltransferase superfamily. RNA M5U methyltransferase family. RlmC subfamily.

The enzyme catalyses uridine(747) in 23S rRNA + S-adenosyl-L-methionine = 5-methyluridine(747) in 23S rRNA + S-adenosyl-L-homocysteine + H(+). Its function is as follows. Catalyzes the formation of 5-methyl-uridine at position 747 (m5U747) in 23S rRNA. This Shewanella sp. (strain ANA-3) protein is 23S rRNA (uracil(747)-C(5))-methyltransferase RlmC.